We begin with the raw amino-acid sequence, 350 residues long: Galactokinase (350 aa).

14 to 17 (EHTD) is a binding site for substrate. ATP-binding positions include Ser46 and 96–102 (GAGLSSS). Mg(2+) is bound by residues Ser102 and Glu134. Asp146 (proton acceptor) is an active-site residue. Tyr196 lines the substrate pocket.

This sequence belongs to the GHMP kinase family. GalK subfamily.

The protein localises to the cytoplasm. The enzyme catalyses alpha-D-galactose + ATP = alpha-D-galactose 1-phosphate + ADP + H(+). It functions in the pathway carbohydrate metabolism; galactose metabolism. Functionally, catalyzes the transfer of the gamma-phosphate of ATP to D-galactose to form alpha-D-galactose-1-phosphate (Gal-1-P). The chain is Galactokinase from Thermotoga neapolitana (strain ATCC 49049 / DSM 4359 / NBRC 107923 / NS-E).